We begin with the raw amino-acid sequence, 304 residues long: Small ribosomal subunit biogenesis GTPase RsgA (304 aa).

The CP-type G domain occupies 70 to 229 (HNELNRPNIA…IADTPGFSKL (160 aa)). GTP contacts are provided by residues 119 to 122 (TKID) and 172 to 180 (GQTGVGKST). Zn(2+) contacts are provided by Cys-253, Cys-259, His-261, and Cys-267.

The protein belongs to the TRAFAC class YlqF/YawG GTPase family. RsgA subfamily. In terms of assembly, monomer. Associates with 30S ribosomal subunit, binds 16S rRNA. It depends on Zn(2+) as a cofactor.

The protein resides in the cytoplasm. In terms of biological role, one of several proteins that assist in the late maturation steps of the functional core of the 30S ribosomal subunit. Helps release RbfA from mature subunits. May play a role in the assembly of ribosomal proteins into the subunit. Circularly permuted GTPase that catalyzes slow GTP hydrolysis, GTPase activity is stimulated by the 30S ribosomal subunit. This is Small ribosomal subunit biogenesis GTPase RsgA from Phytoplasma mali (strain AT).